Consider the following 367-residue polypeptide: Peptide chain release factor 2 (367 aa).

Gln-254 carries the N5-methylglutamine modification.

It belongs to the prokaryotic/mitochondrial release factor family. Methylated by PrmC. Methylation increases the termination efficiency of RF2.

The protein resides in the cytoplasm. Peptide chain release factor 2 directs the termination of translation in response to the peptide chain termination codons UGA and UAA. The protein is Peptide chain release factor 2 of Variovorax paradoxus (strain S110).